The primary structure comprises 112 residues: MSGKIKVTFIVNDGEEKTVEAPIGLSILEITHSNDLDLEGACEGSLACATCHVILEEEFYNKLKKPTEAEEDMLDLAFGLTDTSRLGCQIILTEELDGIKVRLPSATRNIKL.

Positions 5-107 (IKVTFIVNDG…GIKVRLPSAT (103 aa)) constitute a 2Fe-2S ferredoxin-type domain. Positions 42, 48, 51, and 88 each coordinate [2Fe-2S] cluster.

This sequence belongs to the adrenodoxin/putidaredoxin family. The cofactor is [2Fe-2S] cluster.

Ferredoxin are iron-sulfur proteins that transfer electrons in a wide variety of metabolic reactions. The sequence is that of 2Fe-2S ferredoxin (fdxB) from Rickettsia felis (strain ATCC VR-1525 / URRWXCal2) (Rickettsia azadi).